Consider the following 745-residue polypeptide: Eukaryotic translation initiation factor 3 subunit B (745 aa).

The RRM domain occupies 41–129; that stretch reads DVIVIEGVPV…HRFSVHRFTD (89 aa). 4 WD repeats span residues 189–230, 251–293, 303–344, and 580–625; these read EHSR…RFMR, WSHE…RSFP, GQLK…LLEK, and GEHY…LQKH. Residues 644 to 745 adopt a coiled-coil conformation; that stretch reads GKDEQKRVRK…IIEETEEVLA (102 aa).

This sequence belongs to the eIF-3 subunit B family. Component of the eukaryotic translation initiation factor 3 (eIF-3) complex.

It localises to the cytoplasm. RNA-binding component of the eukaryotic translation initiation factor 3 (eIF-3) complex, which is involved in protein synthesis of a specialized repertoire of mRNAs and, together with other initiation factors, stimulates binding of mRNA and methionyl-tRNAi to the 40S ribosome. The eIF-3 complex specifically targets and initiates translation of a subset of mRNAs involved in cell proliferation. This is Eukaryotic translation initiation factor 3 subunit B from Mycosarcoma maydis (Corn smut fungus).